Reading from the N-terminus, the 118-residue chain is Large ribosomal subunit protein bL20 (118 aa).

This sequence belongs to the bacterial ribosomal protein bL20 family.

Functionally, binds directly to 23S ribosomal RNA and is necessary for the in vitro assembly process of the 50S ribosomal subunit. It is not involved in the protein synthesizing functions of that subunit. This is Large ribosomal subunit protein bL20 from Rhodopirellula baltica (strain DSM 10527 / NCIMB 13988 / SH1).